The primary structure comprises 254 residues: CDP-diacylglycerol pyrophosphatase (254 aa).

The helical transmembrane segment at 6-26 (YFLLALLVAILAALAGGYYWL) threads the bilayer.

This sequence belongs to the Cdh family.

It is found in the cell inner membrane. It carries out the reaction a CDP-1,2-diacyl-sn-glycerol + H2O = a 1,2-diacyl-sn-glycero-3-phosphate + CMP + 2 H(+). Its pathway is phospholipid metabolism; CDP-diacylglycerol degradation; phosphatidate from CDP-diacylglycerol: step 1/1. This chain is CDP-diacylglycerol pyrophosphatase, found in Klebsiella pneumoniae (strain 342).